The following is a 781-amino-acid chain: Tax1-binding protein 1 homolog A (781 aa).

Coiled coils occupy residues 148-453 (NSDI…QGDA) and 488-581 (DVEK…YMRE). Positions 441–465 (KLTQQQETQQGDANRNDASTETTLE) are enriched in polar residues. Disordered stretches follow at residues 441-510 (KLTQ…EEEC) and 630-691 (ETRD…EAPA). Over residues 484–495 (TVARDVEKSRDE) the composition is skewed to basic and acidic residues. Over residues 496–510 (EGNEQEEEDEEEEEC) the composition is skewed to acidic residues. Residues 646 to 656 (RPPPLAPPPWG) show a composition bias toward pro residues. UBZ1-type zinc fingers lie at residues 716-742 (HKQC…VESH) and 743-769 (WRVC…VHTH). Zn(2+)-binding residues include Cys-719, Cys-722, His-738, His-742, Cys-746, Cys-749, His-765, and His-769.

As to expression, little expression is observed during pectoral fin development, except for an elevated level of expression in the distal mesenchyme cells of some samples.

Functionally, may have anti-apoptotic activity. This Danio rerio (Zebrafish) protein is Tax1-binding protein 1 homolog A.